The sequence spans 72 residues: ATP-dependent Clp protease ATP-binding subunit ClpA homolog (72 aa).

This sequence belongs to the ClpA/ClpB family.

The protein localises to the plastid. Its subcellular location is the chloroplast. May interact with a ClpP-like protease involved in degradation of denatured proteins in the chloroplast. In Populus euphratica (Euphrates poplar), this protein is ATP-dependent Clp protease ATP-binding subunit ClpA homolog.